A 309-amino-acid chain; its full sequence is Ribose-phosphate pyrophosphokinase (309 aa).

ATP is bound by residues 37 to 39 (DGE) and 96 to 97 (RQ). His-130 and Asp-169 together coordinate Mg(2+). Lys-192 is an active-site residue. D-ribose 5-phosphate is bound by residues Arg-194, Asp-218, and 222–226 (DTAGT).

It belongs to the ribose-phosphate pyrophosphokinase family. Class I subfamily. Homohexamer. Requires Mg(2+) as cofactor.

The protein resides in the cytoplasm. It catalyses the reaction D-ribose 5-phosphate + ATP = 5-phospho-alpha-D-ribose 1-diphosphate + AMP + H(+). It functions in the pathway metabolic intermediate biosynthesis; 5-phospho-alpha-D-ribose 1-diphosphate biosynthesis; 5-phospho-alpha-D-ribose 1-diphosphate from D-ribose 5-phosphate (route I): step 1/1. Functionally, involved in the biosynthesis of the central metabolite phospho-alpha-D-ribosyl-1-pyrophosphate (PRPP) via the transfer of pyrophosphoryl group from ATP to 1-hydroxyl of ribose-5-phosphate (Rib-5-P). This is Ribose-phosphate pyrophosphokinase from Campylobacter jejuni subsp. jejuni serotype O:2 (strain ATCC 700819 / NCTC 11168).